The following is a 357-amino-acid chain: 39 kDa FK506-binding nuclear protein (357 aa).

A Phosphoserine modification is found at Ser92. Positions 113–251 (KNSKKSEDDE…ASKDPRTITG (139 aa)) are disordered. A compositionally biased stretch (acidic residues) spans 120–182 (DDEDENESGE…QDSDDSEAEE (63 aa)). Phosphoserine is present on residues Ser193 and Ser197. A compositionally biased stretch (basic and acidic residues) spans 222 to 237 (EKPEAKKEQPKAKEPA). The 89-residue stretch at 269–357 (GKRVSVYYIG…VFEVELKAVH (89 aa)) folds into the PPIase FKBP-type domain.

Belongs to the FKBP-type PPIase family. In terms of tissue distribution, ubiquitously expressed, highest levels in ovary.

It is found in the nucleus. The enzyme catalyses [protein]-peptidylproline (omega=180) = [protein]-peptidylproline (omega=0). PPIases accelerate the folding of proteins. May function in a signal transduction cascade during early development. This is 39 kDa FK506-binding nuclear protein from Drosophila melanogaster (Fruit fly).